The following is a 242-amino-acid chain: Small ribosomal subunit protein uS2 (242 aa).

Belongs to the universal ribosomal protein uS2 family.

This chain is Small ribosomal subunit protein uS2, found in Shewanella putrefaciens (strain CN-32 / ATCC BAA-453).